The following is a 689-amino-acid chain: Protein CFAP20DC (689 aa).

3 disordered regions span residues 241–263, 333–423, and 584–659; these read LKST…NRIE, SKES…GPSE, and ISTS…DLSV. Composition is skewed to polar residues over residues 251–260 and 343–359; these read TPSGSSSGNN and EESQ…SSRP. The segment covering 394 to 405 has biased composition (acidic residues); that stretch reads SEDDFYGGDSSE. The segment covering 409–421 has biased composition (polar residues); sequence HSIQGSRGPTTGP. The span at 584–593 shows a compositional bias: low complexity; sequence ISTSSDDTTT.

The polypeptide is Protein CFAP20DC (Homo sapiens (Human)).